A 1055-amino-acid polypeptide reads, in one-letter code: SMC5-SMC6 complex localization factor protein 1 (1055 aa).

2 consecutive BRCT domains span residues 2–80 and 121–199; these read EDDA…AQSG and PGAF…LLEK. The interval 312–332 is disordered; sequence KKRKKEKERDSRKDIEHDRST. Basic and acidic residues predominate over residues 318–332; that stretch reads KERDSRKDIEHDRST. The interval 407-1055 is NSE5-like domain; mediates interaction with SLF2; the sequence is PRGILNLIES…VMCRSVTEIS (649 aa). 3 ANK repeats span residues 804 to 834, 838 to 867, and 872 to 901; these read KGET…DINV, AGWT…EVDL, and DGVT…PVLL. A Glycyl lysine isopeptide (Lys-Gly) (interchain with G-Cter in SUMO2) cross-link involves residue lysine 929.

In terms of assembly, interacts (via N-terminus) with SLF2; this interaction links RAD18 to the SMC5-SMC6 complex. Interacts (via BRCT domains) with RAD18; this interaction occurs in a SLF2-independent manner. Interacts with SMC6. Interacts (via BRCT domains) with RAD18 (via C-terminus and phosphorylated form); this interaction is required for efficient repair of UV-induced DNA damage.

It localises to the nucleus. Its subcellular location is the cytoplasm. The protein localises to the cytoskeleton. The protein resides in the microtubule organizing center. It is found in the centrosome. Its function is as follows. Plays a role in the DNA damage response (DDR) pathway by regulating postreplication repair of UV-damaged DNA and genomic stability maintenance. The SLF1-SLF2 complex acts to link RAD18 with the SMC5-SMC6 complex at replication-coupled interstrand cross-links (ICL) and DNA double-strand breaks (DSBs) sites on chromatin during DNA repair in response to stalled replication forks. Promotes the recruitment of SLF2 and the SMC5-SMC6 complex to DNA lesions. In Bos taurus (Bovine), this protein is SMC5-SMC6 complex localization factor protein 1.